Consider the following 382-residue polypeptide: UDP-4-amino-4-deoxy-L-arabinose--oxoglutarate aminotransferase (382 aa).

Lysine 182 is modified (N6-(pyridoxal phosphate)lysine).

This sequence belongs to the DegT/DnrJ/EryC1 family. ArnB subfamily. Homodimer. It depends on pyridoxal 5'-phosphate as a cofactor.

It catalyses the reaction UDP-4-amino-4-deoxy-beta-L-arabinose + 2-oxoglutarate = UDP-beta-L-threo-pentopyranos-4-ulose + L-glutamate. Its pathway is nucleotide-sugar biosynthesis; UDP-4-deoxy-4-formamido-beta-L-arabinose biosynthesis; UDP-4-deoxy-4-formamido-beta-L-arabinose from UDP-alpha-D-glucuronate: step 2/3. It functions in the pathway bacterial outer membrane biogenesis; lipopolysaccharide biosynthesis. In terms of biological role, catalyzes the conversion of UDP-4-keto-arabinose (UDP-Ara4O) to UDP-4-amino-4-deoxy-L-arabinose (UDP-L-Ara4N). The modified arabinose is attached to lipid A and is required for resistance to polymyxin and cationic antimicrobial peptides. The chain is UDP-4-amino-4-deoxy-L-arabinose--oxoglutarate aminotransferase from Pectobacterium carotovorum subsp. carotovorum (strain PC1).